The primary structure comprises 49 residues: Isoflavone reductase homolog 2 (49 aa).

G5–G11 provides a ligand contact to NADP(+).

Belongs to the NmrA-type oxidoreductase family. Isoflavone reductase subfamily.

The protein resides in the cytoplasm. In Pseudotsuga menziesii (Douglas-fir), this protein is Isoflavone reductase homolog 2.